The following is a 256-amino-acid chain: Geranylgeranylglyceryl phosphate synthase (256 aa).

Mg(2+) is bound by residues D28 and S53. Residues Y172–G178, G203–G204, and G225–T226 each bind sn-glycerol 1-phosphate.

This sequence belongs to the GGGP/HepGP synthase family. Group II subfamily. Mg(2+) serves as cofactor.

It is found in the cytoplasm. The catalysed reaction is sn-glycerol 1-phosphate + (2E,6E,10E)-geranylgeranyl diphosphate = sn-3-O-(geranylgeranyl)glycerol 1-phosphate + diphosphate. Its pathway is membrane lipid metabolism; glycerophospholipid metabolism. Its function is as follows. Prenyltransferase that catalyzes the transfer of the geranylgeranyl moiety of geranylgeranyl diphosphate (GGPP) to the C3 hydroxyl of sn-glycerol-1-phosphate (G1P). This reaction is the first ether-bond-formation step in the biosynthesis of archaeal membrane lipids. The chain is Geranylgeranylglyceryl phosphate synthase from Methanococcus maripaludis (strain C7 / ATCC BAA-1331).